Reading from the N-terminus, the 218-residue chain is Probable signal peptidase I-2 (218 aa).

Residues Met1 to Lys26 are Cytoplasmic-facing. A helical membrane pass occupies residues Thr27–Ala43. Over Glu44 to Arg218 the chain is Periplasmic. Residues Ser52 and Lys100 contribute to the active site.

Belongs to the peptidase S26 family.

It is found in the cell membrane. It carries out the reaction Cleavage of hydrophobic, N-terminal signal or leader sequences from secreted and periplasmic proteins.. The chain is Probable signal peptidase I-2 (lepB2) from Synechocystis sp. (strain ATCC 27184 / PCC 6803 / Kazusa).